Here is an 88-residue protein sequence, read N- to C-terminus: Protein LE25 (88 aa).

Residues 1-88 (MQTGKDAASA…YGATGNHTTF (88 aa)) form a disordered region. Residues 14–65 (GMEKTKANVQEKAERMTTRDPLKKEMATEKKEDRVAAAEMGKRDAKAQHAAE) are compositionally biased toward basic and acidic residues.

It belongs to the LEA type 1 family. As to expression, accumulates in developing seeds and drought-stressed leaves.

In Solanum lycopersicum (Tomato), this protein is Protein LE25 (LE25).